Consider the following 149-residue polypeptide: Transcriptional repressor NrdR (149 aa).

Residues 3 to 34 fold into a zinc finger; it reads CPFCATDDTKVVDSRLTADGYQIRRRRECPVC. The region spanning 49–139 is the ATP-cone domain; the sequence is PHIVKNNGSR…VYLSFDDVEE (91 aa).

The protein belongs to the NrdR family. Zn(2+) serves as cofactor.

Its function is as follows. Negatively regulates transcription of bacterial ribonucleotide reductase nrd genes and operons by binding to NrdR-boxes. This is Transcriptional repressor NrdR from Glaesserella parasuis serovar 5 (strain SH0165) (Haemophilus parasuis).